A 256-amino-acid chain; its full sequence is DNA repair protein RecO (256 aa).

The protein belongs to the RecO family.

Involved in DNA repair and RecF pathway recombination. The chain is DNA repair protein RecO from Delftia acidovorans (strain DSM 14801 / SPH-1).